Here is a 92-residue protein sequence, read N- to C-terminus: Bombyxin A-7 (92 aa).

An N-terminal signal peptide occupies residues 1-19 (MKLLLAIALMLTIVMWVST). Gln-20 carries the pyrrolidone carboxylic acid modification. 3 disulfide bridges follow: Cys-29-Cys-79, Cys-41-Cys-92, and Cys-78-Cys-83. Positions 50 to 70 (SDAQYASYGSAWLMPYSEGRG) are cleaved as a propeptide — c peptide like.

The protein belongs to the insulin family. As to quaternary structure, heterodimer of a B chain and an A chain linked by two disulfide bonds.

The protein localises to the secreted. Brain peptide responsible for activation of prothoracic glands to produce ecdysone in insects. This is Bombyxin A-7 (BBXA7) from Bombyx mori (Silk moth).